The chain runs to 98 residues: Small ribosomal subunit protein bS18 (98 aa).

The protein belongs to the bacterial ribosomal protein bS18 family. As to quaternary structure, part of the 30S ribosomal subunit. Forms a tight heterodimer with protein bS6.

Functionally, binds as a heterodimer with protein bS6 to the central domain of the 16S rRNA, where it helps stabilize the platform of the 30S subunit. This Flavobacterium psychrophilum (strain ATCC 49511 / DSM 21280 / CIP 103535 / JIP02/86) protein is Small ribosomal subunit protein bS18.